The sequence spans 287 residues: Formamidopyrimidine-DNA glycosylase (287 aa).

The Schiff-base intermediate with DNA role is filled by Pro-2. Glu-3 functions as the Proton donor in the catalytic mechanism. Lys-61 serves as the catalytic Proton donor; for beta-elimination activity. The DNA site is built by His-95, Arg-115, and Arg-157. The FPG-type zinc finger occupies 243-277; that stretch reads NVYGRADQPCRRCGTPVRREAFMNRSSYSCPRCQP. Arg-267 serves as the catalytic Proton donor; for delta-elimination activity.

It belongs to the FPG family. As to quaternary structure, monomer. Zn(2+) serves as cofactor.

The catalysed reaction is Hydrolysis of DNA containing ring-opened 7-methylguanine residues, releasing 2,6-diamino-4-hydroxy-5-(N-methyl)formamidopyrimidine.. The enzyme catalyses 2'-deoxyribonucleotide-(2'-deoxyribose 5'-phosphate)-2'-deoxyribonucleotide-DNA = a 3'-end 2'-deoxyribonucleotide-(2,3-dehydro-2,3-deoxyribose 5'-phosphate)-DNA + a 5'-end 5'-phospho-2'-deoxyribonucleoside-DNA + H(+). Functionally, involved in base excision repair of DNA damaged by oxidation or by mutagenic agents. Acts as a DNA glycosylase that recognizes and removes damaged bases. Has a preference for oxidized purines, such as 7,8-dihydro-8-oxoguanine (8-oxoG). Has AP (apurinic/apyrimidinic) lyase activity and introduces nicks in the DNA strand. Cleaves the DNA backbone by beta-delta elimination to generate a single-strand break at the site of the removed base with both 3'- and 5'-phosphates. In Salinispora arenicola (strain CNS-205), this protein is Formamidopyrimidine-DNA glycosylase.